A 318-amino-acid chain; its full sequence is Annexin D6 (318 aa).

Position 2 is an N-acetylalanine (Ala2). Annexin repeat units lie at residues 11 to 82, 83 to 154, 168 to 239, and 243 to 314; these read PLPE…LWTL, DPTE…PLVS, KLAR…TAIK, and YPEK…ALLG. Ca(2+)-binding residues include Phe24, Gly26, Gly28, and Glu68. Ser95 carries the phosphoserine modification. Phosphothreonine is present on residues Thr100 and Thr112. Tyr129 is subject to Phosphotyrosine. Ca(2+) is bound by residues Ile256, Arg258, and Gly260. Tyr285 carries the post-translational modification Phosphotyrosine. At Ser290 the chain carries Phosphoserine. Ca(2+) is bound by residues Asp300 and Thr301.

This sequence belongs to the annexin (TC 1.A.31.1) family. As to expression, expressed in flowers.

In Arabidopsis thaliana (Mouse-ear cress), this protein is Annexin D6 (ANN6).